Consider the following 415-residue polypeptide: Acetate kinase (415 aa).

A Mg(2+)-binding site is contributed by Asn8. Residue Lys15 coordinates ATP. Arg106 contacts substrate. The Proton donor/acceptor role is filled by Asp163. ATP-binding positions include 222-226 (HLGNG), 296-298 (DLR), and 344-348 (GIGEN). Glu397 contributes to the Mg(2+) binding site.

The protein belongs to the acetokinase family. As to quaternary structure, homodimer. Mg(2+) is required as a cofactor. The cofactor is Mn(2+).

The protein resides in the cytoplasm. The enzyme catalyses acetate + ATP = acetyl phosphate + ADP. It functions in the pathway metabolic intermediate biosynthesis; acetyl-CoA biosynthesis; acetyl-CoA from acetate: step 1/2. Functionally, catalyzes the formation of acetyl phosphate from acetate and ATP. Can also catalyze the reverse reaction. This chain is Acetate kinase, found in Thermosynechococcus vestitus (strain NIES-2133 / IAM M-273 / BP-1).